A 1264-amino-acid chain; its full sequence is Box A-binding factor (1264 aa).

The segment covering Met1–Ala11 has biased composition (basic and acidic residues). Disordered stretches follow at residues Met1–Gly25, Thr161–Lys200, Leu234–Gln253, Gln405–Ser463, Asn523–Thr585, and His599–Gln627. The span at Ala16 to Gly25 shows a compositional bias: gly residues. The span at Thr161 to Ala171 shows a compositional bias: low complexity. A compositionally biased stretch (polar residues) spans Ser189 to Ser198. Residues Gln409–Gln421 are compositionally biased toward basic residues. 3 stretches are compositionally biased toward low complexity: residues Gln422 to Gln438, Ser447 to Ser459, and Asn523 to Gln554. The span at Gln555–His564 shows a compositional bias: basic residues. Low complexity-rich tracts occupy residues Asn565 to Thr585 and His599 to His614. Residues Cys803–Cys827 form a GATA-type zinc finger. Disordered regions lie at residues Thr841–Lys867, Asp899–Asn1048, and Glu1181–Glu1202. Low complexity-rich tracts occupy residues Pro909 to Ser950 and Gln985 to Ser1007. The span at Thr1008–His1023 shows a compositional bias: polar residues. Low complexity-rich tracts occupy residues Asn1024 to Asn1048 and Gln1185 to His1200. Ser1208 and Ser1210 each carry phosphoserine.

As to quaternary structure, interacts (via GATA-type Zn-finger domain) with Bfc; this interaction enhances srp binding to the promoter of crq/croquemort.

Its subcellular location is the nucleus. Functionally, may function as a transcriptional activator protein and may play a key role in the organogenesis of the fat body. Binds a sequence element (5'-[TA]GATAA-3') found in the larval promoters of all known alcohol dehydrogenase (ADH) genes. Acts as a homeotic gene downstream of the terminal gap gene HKB to promote morphogenesis and differentiation of anterior and posterior midgut. Together with transcriptional cofactor Bfc directly binds the promoter of phagocytic receptor crq/croquemort to upregulate its expression and stimulate efferocytosis in response to apoptotic cells, including during embryogenesis. This chain is Box A-binding factor (srp), found in Drosophila melanogaster (Fruit fly).